The chain runs to 758 residues: Probable serine/threonine-protein kinase HAL5-like (758 aa).

Disordered stretches follow at residues 1–170 (MGTV…SADD) and 189–252 (IDNA…HRGR). A compositionally biased stretch (polar residues) spans 22–57 (RSISGSIKSLFKPSSVQNSTPTVSPHESSPPLGNSD). Positions 58 to 69 (NLKKLVDTKRAE) are enriched in basic and acidic residues. Over residues 129–153 (SSPRQSSSTNDRSSITSATSSVTSA) the composition is skewed to low complexity. Residues 216 to 226 (DKNFESSEYEI) are compositionally biased toward basic and acidic residues. The span at 227–247 (RSNSLSRIHSTPQNESPTVNN) shows a compositional bias: polar residues. One can recognise a Protein kinase domain in the interval 442–744 (KSMGVVLGHG…IDQLLQSPWM (303 aa)). Residues 448–456 (LGHGAYGVV) and K485 each bind ATP. The Proton acceptor role is filled by D595.

The protein belongs to the protein kinase superfamily. CAMK Ser/Thr protein kinase family. NPR/HAL subfamily. HAL5 sub-subfamily.

It carries out the reaction L-seryl-[protein] + ATP = O-phospho-L-seryl-[protein] + ADP + H(+). The catalysed reaction is L-threonyl-[protein] + ATP = O-phospho-L-threonyl-[protein] + ADP + H(+). The sequence is that of Probable serine/threonine-protein kinase HAL5-like from Vanderwaltozyma polyspora (strain ATCC 22028 / DSM 70294 / BCRC 21397 / CBS 2163 / NBRC 10782 / NRRL Y-8283 / UCD 57-17) (Kluyveromyces polysporus).